Consider the following 520-residue polypeptide: Transactivator/viroplasmin protein (520 aa).

2 disordered regions span residues 103–126 (SDFL…SVAP) and 487–520 (EDAS…KQVD).

Belongs to the caulimoviridae viroplasmin family.

It is found in the host cytoplasm. Its function is as follows. Enhances the ribosomal termination-reinitiation event leading to the translation of major open reading frames on the polycistronic viral RNAs. The sequence is that of Transactivator/viroplasmin protein from Arabidopsis thaliana (Mouse-ear cress).